The following is a 741-amino-acid chain: Melanoma-associated antigen D4 (741 aa).

A compositionally biased stretch (polar residues) spans 1-13; the sequence is MAEGSFSVQSESY. Disordered regions lie at residues 1-27, 136-206, 247-296, and 323-379; these read MAEGSFSVQSESYSVEDMDEGSDEVGE, RVAT…EGPS, MAFP…KALA, and PEGA…QPSL. Residues 14–27 show a composition bias toward acidic residues; that stretch reads SVEDMDEGSDEVGE. 2 stretches are compositionally biased toward polar residues: residues 140–151 and 187–196; these read PQVSGEDTQPTT and TSAQSQTGSP. A compositionally biased stretch (acidic residues) spans 354–363; it reads DEYESSEEER. In terms of domain architecture, MAGE spans 413–611; sequence LQERANKLVK…REWKAHFLEA (199 aa). The interval 700-720 is disordered; sequence VSSGTNGGASTSVLDGPSTSS. Over residues 701 to 720 the composition is skewed to polar residues; the sequence is SSGTNGGASTSVLDGPSTSS.

In terms of assembly, interacts with TRIM27. Expressed only in brain and ovary among normal tissues. Isoform 1 and isoform 2 are specifically expressed in glioma cells among cancer cells. Detected in some renal cell carcinoma samples.

May enhance ubiquitin ligase activity of RING-type zinc finger-containing E3 ubiquitin-protein ligases. Proposed to act through recruitment and/or stabilization of the Ubl-conjugating enzyme (E2) at the E3:substrate complex. This Homo sapiens (Human) protein is Melanoma-associated antigen D4 (MAGED4).